The primary structure comprises 716 residues: Probable extracellular serine carboxypeptidase (716 aa).

Positions 1 to 17 are cleaved as a signal peptide; that stretch reads MVKLTACLLLLVAAVQA. N-linked (GlcNAc...) asparagine glycosylation is found at Asn-143 and Asn-174. Catalysis depends on Ser-188, which acts as the Charge relay system. Residues Asn-258 and Asn-354 are each glycosylated (N-linked (GlcNAc...) asparagine). Asp-466 acts as the Charge relay system in catalysis. N-linked (GlcNAc...) asparagine glycosylation is found at Asn-507 and Asn-550. The segment at 617-636 is disordered; the sequence is RDLAAQPSKSKKDRRGQQLS. The chain crosses the membrane as a helical span at residues 652–672; that stretch reads LGFVSFLVFAFSSFTFIPDIE.

This sequence belongs to the peptidase S28 family.

The protein resides in the membrane. The protein localises to the secreted. This Arthroderma benhamiae (strain ATCC MYA-4681 / CBS 112371) (Trichophyton mentagrophytes) protein is Probable extracellular serine carboxypeptidase.